A 194-amino-acid polypeptide reads, in one-letter code: Interleukin-17C (194 aa).

The signal sequence occupies residues 1 to 16; that stretch reads MSLLLLGWLPTGMTHQ. 2 disulfides stabilise this stretch: Cys-125-Cys-185 and Cys-130-Cys-187.

Belongs to the IL-17 family. Binds to a heterodimer formed by IL17RA and IL17RE. As to expression, expressed by epithelial cells after bacterial challenge. Low expression, if any, in lymphocytes.

It localises to the secreted. Its function is as follows. Cytokine that plays a crucial role in innate immunity of the epithelium, including to intestinal bacterial pathogens, in an autocrine manner. Stimulates the production of antibacterial peptides and pro-inflammatory molecules for host defense by signaling through the NFKB and MAPK pathways. Acts synergically with IL22, TNF and IL1B in inducing antibacterial peptides. May have protective function by maintaining epithelial homeostasis after an inflammatory challenge, such as that caused in the intestine by dextran sulfate sodium in a colitis model. May also promote an inflammatory phenotype, such as skin in a psoriasis model. Enhanced IL17C/IL17RE signaling may also lead to greater susceptibility to autoimmune diseases, such as autoimmune encephalitis. In Mus musculus (Mouse), this protein is Interleukin-17C (Il17c).